The primary structure comprises 110 residues: Thiosulfate sulfurtransferase GlpE (110 aa).

One can recognise a Rhodanese domain in the interval 17-105 (KQEGAVVVDI…WRATYPAETA (89 aa)). Catalysis depends on Cys-65, which acts as the Cysteine persulfide intermediate.

The protein belongs to the GlpE family.

The protein localises to the cytoplasm. It catalyses the reaction thiosulfate + hydrogen cyanide = thiocyanate + sulfite + 2 H(+). The enzyme catalyses thiosulfate + [thioredoxin]-dithiol = [thioredoxin]-disulfide + hydrogen sulfide + sulfite + 2 H(+). Functionally, transferase that catalyzes the transfer of sulfur from thiosulfate to thiophilic acceptors such as cyanide or dithiols. May function in a CysM-independent thiosulfate assimilation pathway by catalyzing the conversion of thiosulfate to sulfite, which can then be used for L-cysteine biosynthesis. This chain is Thiosulfate sulfurtransferase GlpE, found in Pseudomonas putida (strain GB-1).